The primary structure comprises 366 residues: Histidinol-phosphate aminotransferase (366 aa).

Position 228 is an N6-(pyridoxal phosphate)lysine (K228).

Belongs to the class-II pyridoxal-phosphate-dependent aminotransferase family. Histidinol-phosphate aminotransferase subfamily. As to quaternary structure, homodimer. It depends on pyridoxal 5'-phosphate as a cofactor.

The enzyme catalyses L-histidinol phosphate + 2-oxoglutarate = 3-(imidazol-4-yl)-2-oxopropyl phosphate + L-glutamate. It participates in amino-acid biosynthesis; L-histidine biosynthesis; L-histidine from 5-phospho-alpha-D-ribose 1-diphosphate: step 7/9. The polypeptide is Histidinol-phosphate aminotransferase (Corynebacterium diphtheriae (strain ATCC 700971 / NCTC 13129 / Biotype gravis)).